The following is a 435-amino-acid chain: 5-hydroxybenzimidazole synthase (435 aa).

Residues Met-95, Tyr-124, His-163, 186 to 188 (SKG), 227 to 230 (NGLR), and Glu-266 each bind substrate. His-270 provides a ligand contact to Zn(2+). Substrate is bound at residue Tyr-293. His-334 provides a ligand contact to Zn(2+). [4Fe-4S] cluster is bound by residues Cys-410, Cys-413, and Cys-417.

Belongs to the ThiC family. 5-hydroxybenzimidazole synthase subfamily. Homodimer. Requires [4Fe-4S] cluster as cofactor.

It carries out the reaction 5-amino-1-(5-phospho-beta-D-ribosyl)imidazole + AH2 + S-adenosyl-L-methionine = 5-hydroxybenzimidazole + 5'-deoxyadenosine + formate + L-methionine + A + NH4(+) + phosphate + 2 H(+). Its pathway is cofactor biosynthesis; adenosylcobalamin biosynthesis. Its function is as follows. Catalyzes the complex conversion of aminoimidazole ribotide (AIR) to 5-hydroxybenzimidazole (5-HBI) in a radical S-adenosyl-L-methionine (SAM)-dependent reaction. Is thus involved in the anaerobic biosynthesis of dimethylbenzimidazole (DMB), the lower axial ligand of vitamin B12 (cobalamin). This chain is 5-hydroxybenzimidazole synthase, found in Desulfuromonas acetoxidans (strain DSM 684 / 11070).